The chain runs to 382 residues: Galactokinase (382 aa).

34 to 37 (EHTD) is a substrate binding site. 124–130 (GAGLSSS) lines the ATP pocket. Residues serine 130 and glutamate 162 each contribute to the Mg(2+) site. Aspartate 174 serves as the catalytic Proton acceptor. Residue tyrosine 223 participates in substrate binding.

This sequence belongs to the GHMP kinase family. GalK subfamily.

The protein resides in the cytoplasm. The catalysed reaction is alpha-D-galactose + ATP = alpha-D-galactose 1-phosphate + ADP + H(+). The protein operates within carbohydrate metabolism; galactose metabolism. Its function is as follows. Catalyzes the transfer of the gamma-phosphate of ATP to D-galactose to form alpha-D-galactose-1-phosphate (Gal-1-P). This chain is Galactokinase, found in Salmonella paratyphi B (strain ATCC BAA-1250 / SPB7).